The sequence spans 404 residues: S-adenosylmethionine synthase (404 aa).

Positions 1–13 are enriched in polar residues; the sequence is MSHSRYFFTSESV. Positions 1 to 20 are disordered; sequence MSHSRYFFTSESVSEGHPDK. Residue histidine 17 participates in ATP binding. Aspartate 19 lines the Mg(2+) pocket. Residue glutamate 45 coordinates K(+). Residues glutamate 58 and glutamine 101 each coordinate L-methionine. A flexible loop region spans residues 101-111; sequence QSPDINRGVDR. ATP is bound by residues 172–174, 246–247, aspartate 255, 261–262, alanine 278, and lysine 282; these read DSK, RF, and RK. Aspartate 255 contacts L-methionine. Lysine 286 serves as a coordination point for L-methionine.

This sequence belongs to the AdoMet synthase family. In terms of assembly, homotetramer; dimer of dimers. It depends on Mg(2+) as a cofactor. K(+) is required as a cofactor.

It localises to the cytoplasm. The enzyme catalyses L-methionine + ATP + H2O = S-adenosyl-L-methionine + phosphate + diphosphate. It functions in the pathway amino-acid biosynthesis; S-adenosyl-L-methionine biosynthesis; S-adenosyl-L-methionine from L-methionine: step 1/1. Its function is as follows. Catalyzes the formation of S-adenosylmethionine (AdoMet) from methionine and ATP. The overall synthetic reaction is composed of two sequential steps, AdoMet formation and the subsequent tripolyphosphate hydrolysis which occurs prior to release of AdoMet from the enzyme. The chain is S-adenosylmethionine synthase from Chlorobaculum parvum (strain DSM 263 / NCIMB 8327) (Chlorobium vibrioforme subsp. thiosulfatophilum).